Here is a 219-residue protein sequence, read N- to C-terminus: tRNA (guanine-N(7)-)-methyltransferase (219 aa).

Asp-47, Glu-72, Asn-99, and Asp-125 together coordinate S-adenosyl-L-methionine. Asp-125 is an active-site residue. Lys-129 and Asp-161 together coordinate substrate.

The protein belongs to the class I-like SAM-binding methyltransferase superfamily. TrmB family.

The enzyme catalyses guanosine(46) in tRNA + S-adenosyl-L-methionine = N(7)-methylguanosine(46) in tRNA + S-adenosyl-L-homocysteine. The protein operates within tRNA modification; N(7)-methylguanine-tRNA biosynthesis. Catalyzes the formation of N(7)-methylguanine at position 46 (m7G46) in tRNA. The chain is tRNA (guanine-N(7)-)-methyltransferase from Nostoc sp. (strain PCC 7120 / SAG 25.82 / UTEX 2576).